A 145-amino-acid polypeptide reads, in one-letter code: Ubiquitin-conjugating enzyme E2 variant 1C (145 aa).

Residues 12–145 (PRNFRLLEEL…LVQPPEGTFF (134 aa)) form the UBC core domain.

The protein belongs to the ubiquitin-conjugating enzyme family. As to quaternary structure, heterodimer with UBC35 or UBC36. Expressed in roots, shoots, leaves, stems and flowers, but not in pollen.

Has no ubiquitin ligase activity on its own. The heterodimer with UBC catalyzes the synthesis of non-canonical poly-ubiquitin chains that are linked through 'Lys-63'. This type of poly-ubiquitination does not lead to protein degradation by the proteasome. Mediates transcriptional activation of target genes. May play a role in the control of progress through the cell cycle and differentiation. May play a role in the error-free DNA repair pathway and contributes to the survival of cells after DNA damage. The protein is Ubiquitin-conjugating enzyme E2 variant 1C (UEV1C) of Arabidopsis thaliana (Mouse-ear cress).